The primary structure comprises 264 residues: ATP synthase subunit a (264 aa).

6 consecutive transmembrane segments (helical) span residues 29-49, 89-109, 134-154, 177-197, 208-228, and 235-255; these read TWHI…LWLF, VIAP…FMDM, DLNI…YYSI, IPVN…SLAL, LIFI…TLGV, and LIFH…LTIV.

It belongs to the ATPase A chain family. F-type ATPases have 2 components, CF(1) - the catalytic core - and CF(0) - the membrane proton channel. CF(1) has five subunits: alpha(3), beta(3), gamma(1), delta(1), epsilon(1). CF(0) has three main subunits: a(1), b(2) and c(9-12). The alpha and beta chains form an alternating ring which encloses part of the gamma chain. CF(1) is attached to CF(0) by a central stalk formed by the gamma and epsilon chains, while a peripheral stalk is formed by the delta and b chains.

It is found in the cell inner membrane. Its function is as follows. Key component of the proton channel; it plays a direct role in the translocation of protons across the membrane. The sequence is that of ATP synthase subunit a from Shewanella woodyi (strain ATCC 51908 / MS32).